A 331-amino-acid chain; its full sequence is Adenosine deaminase (331 aa).

Histidine 12 and histidine 14 together coordinate Zn(2+). The substrate site is built by histidine 14, aspartate 16, and glycine 170. Histidine 197 is a Zn(2+) binding site. Glutamate 200 (proton donor) is an active-site residue. Residue aspartate 278 participates in Zn(2+) binding.

This sequence belongs to the metallo-dependent hydrolases superfamily. Adenosine and AMP deaminases family. Adenosine deaminase subfamily. It depends on Zn(2+) as a cofactor.

The enzyme catalyses adenosine + H2O + H(+) = inosine + NH4(+). The catalysed reaction is 2'-deoxyadenosine + H2O + H(+) = 2'-deoxyinosine + NH4(+). In terms of biological role, catalyzes the hydrolytic deamination of adenosine and 2-deoxyadenosine. This chain is Adenosine deaminase, found in Clostridium botulinum (strain 657 / Type Ba4).